Here is a 464-residue protein sequence, read N- to C-terminus: Protein FAM90A12 (464 aa).

Disordered stretches follow at residues 1-42 (MMAR…DPRL), 70-389 (PATL…HDGA), and 411-437 (APSF…SEAP). Basic and acidic residues-rich tracts occupy residues 74–89 (GKKE…KPRA) and 97–114 (NKDK…DPQR). Residues 180-197 (LASLSPLRKASLSSSSSL) are compositionally biased toward low complexity.

This sequence belongs to the FAM90 family.

This is Protein FAM90A12 from Homo sapiens (Human).